Consider the following 617-residue polypeptide: 1-deoxy-D-xylulose-5-phosphate synthase (617 aa).

Thiamine diphosphate-binding positions include histidine 76 and 117–119 (GHS). Mg(2+) is bound at residue aspartate 148. Thiamine diphosphate contacts are provided by residues 149 to 150 (GA), asparagine 177, tyrosine 285, and glutamate 366. Residue asparagine 177 coordinates Mg(2+).

It belongs to the transketolase family. DXPS subfamily. Homodimer. Mg(2+) serves as cofactor. Thiamine diphosphate is required as a cofactor.

The catalysed reaction is D-glyceraldehyde 3-phosphate + pyruvate + H(+) = 1-deoxy-D-xylulose 5-phosphate + CO2. Its pathway is metabolic intermediate biosynthesis; 1-deoxy-D-xylulose 5-phosphate biosynthesis; 1-deoxy-D-xylulose 5-phosphate from D-glyceraldehyde 3-phosphate and pyruvate: step 1/1. Functionally, catalyzes the acyloin condensation reaction between C atoms 2 and 3 of pyruvate and glyceraldehyde 3-phosphate to yield 1-deoxy-D-xylulose-5-phosphate (DXP). In Histophilus somni (strain 129Pt) (Haemophilus somnus), this protein is 1-deoxy-D-xylulose-5-phosphate synthase.